Consider the following 216-residue polypeptide: Flavin prenyltransferase UbiX (216 aa).

Residues 9–11, Ser-35, and Arg-144 contribute to the FMN site; that span reads GAS. Dimethylallyl phosphate-binding residues include Tyr-174 and Arg-190.

This sequence belongs to the UbiX/PAD1 family.

The enzyme catalyses dimethylallyl phosphate + FMNH2 = prenylated FMNH2 + phosphate. Its function is as follows. Flavin prenyltransferase that catalyzes the synthesis of the prenylated FMN cofactor (prenyl-FMN) for 4-hydroxy-3-polyprenylbenzoic acid decarboxylase UbiD. The prenyltransferase is metal-independent and links a dimethylallyl moiety from dimethylallyl monophosphate (DMAP) to the flavin N5 and C6 atoms of FMN. In Streptomyces coelicolor (strain ATCC BAA-471 / A3(2) / M145), this protein is Flavin prenyltransferase UbiX.